The chain runs to 238 residues: Protein shisa-3 homolog (238 aa).

The N-terminal stretch at 1-21 is a signal peptide; sequence MGALLAFCLLVGLLRWGPAGA. Residues 22 to 98 are Lumenal-facing; the sequence is QQPGEYCHGW…GITAQPVYVP (77 aa). A helical membrane pass occupies residues 99–119; the sequence is FLIVGSIFIAFIILGSLVAIY. Topologically, residues 120 to 238 are cytoplasmic; the sequence is CCTCLRPKEP…GKSCPDFSSS (119 aa).

The protein belongs to the shisa family.

It localises to the endoplasmic reticulum membrane. Its function is as follows. Plays an essential role in the maturation of presomitic mesoderm cells by individual attenuation of both FGF and WNT signaling. In Mus musculus (Mouse), this protein is Protein shisa-3 homolog (Shisa3).